Reading from the N-terminus, the 35-residue chain is Photosystem II reaction center protein M (35 aa).

The chain crosses the membrane as a helical span at residues 5–25; sequence ILAFVATALFILIPTAFLLIL.

Belongs to the PsbM family. In terms of assembly, PSII is composed of 1 copy each of membrane proteins PsbA, PsbB, PsbC, PsbD, PsbE, PsbF, PsbH, PsbI, PsbJ, PsbK, PsbL, PsbM, PsbT, PsbX, PsbY, PsbZ, Psb30/Ycf12, at least 3 peripheral proteins of the oxygen-evolving complex and a large number of cofactors. It forms dimeric complexes.

Its subcellular location is the plastid. It is found in the chloroplast thylakoid membrane. One of the components of the core complex of photosystem II (PSII). PSII is a light-driven water:plastoquinone oxidoreductase that uses light energy to abstract electrons from H(2)O, generating O(2) and a proton gradient subsequently used for ATP formation. It consists of a core antenna complex that captures photons, and an electron transfer chain that converts photonic excitation into a charge separation. This subunit is found at the monomer-monomer interface. In Adiantum capillus-veneris (Maidenhair fern), this protein is Photosystem II reaction center protein M.